A 184-amino-acid chain; its full sequence is Large ribosomal subunit protein uL6 (184 aa).

The protein belongs to the universal ribosomal protein uL6 family. As to quaternary structure, part of the 50S ribosomal subunit.

In terms of biological role, this protein binds to the 23S rRNA, and is important in its secondary structure. It is located near the subunit interface in the base of the L7/L12 stalk, and near the tRNA binding site of the peptidyltransferase center. In Pseudothermotoga lettingae (strain ATCC BAA-301 / DSM 14385 / NBRC 107922 / TMO) (Thermotoga lettingae), this protein is Large ribosomal subunit protein uL6.